The primary structure comprises 325 residues: Nod factor export ATP-binding protein I (325 aa).

In terms of domain architecture, ABC transporter spans 27–257; the sequence is LELRKVRKQY…QIGCDVVEVY (231 aa). 59–66 serves as a coordination point for ATP; sequence GPNGAGKT.

The protein belongs to the ABC transporter superfamily. Lipooligosaccharide exporter (TC 3.A.1.102) family. The complex is composed of two ATP-binding proteins (NodI) and two transmembrane proteins (NodJ).

Its subcellular location is the cell inner membrane. Functionally, part of the ABC transporter complex NodIJ involved in the export of the nodulation factors (Nod factors), the bacterial signal molecules that induce symbiosis and subsequent nodulation induction. Nod factors are LCO (lipo-chitin oligosaccharide), a modified beta-1,4-linked N-acetylglucosamine oligosaccharide. This subunit is responsible for energy coupling to the transport system. This chain is Nod factor export ATP-binding protein I, found in Cupriavidus pinatubonensis (strain JMP 134 / LMG 1197) (Cupriavidus necator (strain JMP 134)).